Consider the following 508-residue polypeptide: 2,3-bisphosphoglycerate-independent phosphoglycerate mutase (508 aa).

Mn(2+)-binding residues include Asp14 and Ser64. Catalysis depends on Ser64, which acts as the Phosphoserine intermediate. Substrate-binding positions include His125, 155-156 (RD), Arg187, Arg193, 259-262 (RADR), and Lys332. Residues Asp399, His403, Asp440, His441, and His459 each contribute to the Mn(2+) site.

It belongs to the BPG-independent phosphoglycerate mutase family. In terms of assembly, monomer. Requires Mn(2+) as cofactor.

The catalysed reaction is (2R)-2-phosphoglycerate = (2R)-3-phosphoglycerate. It participates in carbohydrate degradation; glycolysis; pyruvate from D-glyceraldehyde 3-phosphate: step 3/5. Its function is as follows. Catalyzes the interconversion of 2-phosphoglycerate and 3-phosphoglycerate. The sequence is that of 2,3-bisphosphoglycerate-independent phosphoglycerate mutase from Pseudomonas fluorescens (strain Pf0-1).